The chain runs to 579 residues: Protein O-linked-mannose beta-1,4-N-acetylglucosaminyltransferase 2 (579 aa).

The Cytoplasmic segment spans residues 1 to 4 (MGVG). Residues 5–25 (TLLNGLLVSVVAALLWKYSKL) form a helical; Signal-anchor for type II membrane protein membrane-spanning segment. Topologically, residues 26-579 (SEHAALLEEE…PFADVLMCRT (554 aa)) are lumenal. N-linked (GlcNAc...) asparagine glycosylation is found at N98, N275, and N542. In terms of domain architecture, Fibronectin type-III spans 480 to 579 (HPGRVRDARC…PFADVLMCRT (100 aa)).

Belongs to the glycosyltransferase 61 family.

The protein resides in the endoplasmic reticulum membrane. It catalyses the reaction 3-O-(alpha-D-mannosyl)-L-threonyl-[protein] + UDP-N-acetyl-alpha-D-glucosamine = 3-O-(N-acetyl-beta-D-glucosaminyl-(1-&gt;4)-alpha-D-mannosyl)-L-threonyl-[protein] + UDP + H(+). It participates in protein modification; protein glycosylation. Its function is as follows. O-linked mannose beta-1,4-N-acetylglucosaminyltransferase that transfers UDP-N-acetyl-D-glucosamine to the 4-position of the mannose to generate N-acetyl-D-glucosamine-beta-1,4-O-D-mannosylprotein. Involved in the biosynthesis of the phosphorylated O-mannosyl trisaccharide (N-acetylgalactosamine-beta-3-N-acetylglucosamine-beta-4-(phosphate-6-)mannose), a carbohydrate structure present in alpha-dystroglycan (DAG1), which is required for binding laminin G-like domain-containing extracellular proteins with high affinity. In Tetraodon nigroviridis (Spotted green pufferfish), this protein is Protein O-linked-mannose beta-1,4-N-acetylglucosaminyltransferase 2 (pomgnt2).